Consider the following 312-residue polypeptide: Apolipoprotein E (312 aa).

Residues 1–18 (MKALWAVLLVTLLAGCLA) form the signal peptide. 8 repeat units span residues 72–93 (VLME…EQLG), 94–115 (PVAE…ARLG), 116–137 (ADME…TMLG), 138–159 (QSTE…KRLM), 160–181 (RDAE…EGAE), 182–203 (RGVS…QRTA), 204–225 (NLGA…DRIR), and 226–247 (GRLE…EHME). The segment at 72–247 (VLMEDTMTEV…RLEEVREHME (176 aa)) is 8 X 22 AA approximate tandem repeats. Methionine 135 is modified (methionine sulfoxide). The residue at position 139 (serine 139) is a Phosphoserine. Positions 150-160 (HLRKMRKRLMR) are LDL and other lipoprotein receptors binding. 154–157 (MRKR) lines the heparin pocket. Positions 202-282 (TANLGAGAAQ…GWFEPIVEDM (81 aa)) are lipid-binding and lipoprotein association. 221-228 (GDRIRGRL) contacts heparin. Residues 258 to 312 (QQIRLQAEIFQARLKGWFEPIVEDMHRQWANLMEKIQASVATNPIISTPMPQENQ) form a homooligomerization region. A specificity for association with VLDL region spans residues 270–282 (RLKGWFEPIVEDM).

This sequence belongs to the apolipoprotein A1/A4/E family. Homotetramer. May interact with ABCA1; functionally associated with ABCA1 in the biogenesis of HDLs. May interact with APP/A4 amyloid-beta peptide; the interaction is extremely stable in vitro but its physiological significance is unclear. May interact with MAPT. May interact with MAP2. In the cerebrospinal fluid, interacts with secreted SORL1. Interacts with PMEL; this allows the loading of PMEL luminal fragment on ILVs to induce fibril nucleation. In terms of processing, APOE exists as multiple glycosylated and sialylated glycoforms within cells and in plasma. The extent of glycosylation and sialylation are tissue and context specific. Glycated in plasma VLDL. Post-translationally, phosphorylated by FAM20C in the extracellular medium.

The protein localises to the secreted. It localises to the extracellular space. The protein resides in the extracellular matrix. Its subcellular location is the extracellular vesicle. It is found in the endosome. The protein localises to the multivesicular body. APOE is an apolipoprotein, a protein associating with lipid particles, that mainly functions in lipoprotein-mediated lipid transport between organs via the plasma and interstitial fluids. APOE is a core component of plasma lipoproteins and is involved in their production, conversion and clearance. Apolipoproteins are amphipathic molecules that interact both with lipids of the lipoprotein particle core and the aqueous environment of the plasma. As such, APOE associates with chylomicrons, chylomicron remnants, very low density lipoproteins (VLDL) and intermediate density lipoproteins (IDL) but shows a preferential binding to high-density lipoproteins (HDL). It also binds a wide range of cellular receptors including the LDL receptor/LDLR, the LDL receptor-related proteins LRP1, LRP2 and LRP8 and the very low-density lipoprotein receptor/VLDLR that mediate the cellular uptake of the APOE-containing lipoprotein particles. Finally, APOE also has a heparin-binding activity and binds heparan-sulfate proteoglycans on the surface of cells, a property that supports the capture and the receptor-mediated uptake of APOE-containing lipoproteins by cells. A main function of APOE is to mediate lipoprotein clearance through the uptake of chylomicrons, VLDLs, and HDLs by hepatocytes. APOE is also involved in the biosynthesis by the liver of VLDLs as well as their uptake by peripheral tissues ensuring the delivery of triglycerides and energy storage in muscle, heart and adipose tissues. By participating in the lipoprotein-mediated distribution of lipids among tissues, APOE plays a critical role in plasma and tissues lipid homeostasis. APOE is also involved in two steps of reverse cholesterol transport, the HDLs-mediated transport of cholesterol from peripheral tissues to the liver, and thereby plays an important role in cholesterol homeostasis. First, it is functionally associated with ABCA1 in the biogenesis of HDLs in tissues. Second, it is enriched in circulating HDLs and mediates their uptake by hepatocytes. APOE also plays an important role in lipid transport in the central nervous system, regulating neuron survival and sprouting. The sequence is that of Apolipoprotein E (Apoe) from Mus pahari (Gairdner's shrew-mouse).